We begin with the raw amino-acid sequence, 186 residues long: Elongation factor P (186 aa).

The protein belongs to the elongation factor P family.

The protein resides in the cytoplasm. It functions in the pathway protein biosynthesis; polypeptide chain elongation. Functionally, involved in peptide bond synthesis. Stimulates efficient translation and peptide-bond synthesis on native or reconstituted 70S ribosomes in vitro. Probably functions indirectly by altering the affinity of the ribosome for aminoacyl-tRNA, thus increasing their reactivity as acceptors for peptidyl transferase. The sequence is that of Elongation factor P from Cupriavidus pinatubonensis (strain JMP 134 / LMG 1197) (Cupriavidus necator (strain JMP 134)).